A 568-amino-acid chain; its full sequence is Light-independent protochlorophyllide reductase subunit B (568 aa).

[4Fe-4S] cluster is bound at residue Asp-36. Asp-293 acts as the Proton donor in catalysis. Position 437 to 438 (Gly-437 to Met-438) interacts with substrate. The interval Ala-476–Pro-517 is disordered. The segment covering Ser-498–Val-515 has biased composition (polar residues).

It belongs to the ChlB/BchB/BchZ family. Protochlorophyllide reductase is composed of three subunits; BchL, BchN and BchB. Forms a heterotetramer of two BchB and two BchN subunits. Requires [4Fe-4S] cluster as cofactor.

The catalysed reaction is chlorophyllide a + oxidized 2[4Fe-4S]-[ferredoxin] + 2 ADP + 2 phosphate = protochlorophyllide a + reduced 2[4Fe-4S]-[ferredoxin] + 2 ATP + 2 H2O. Its pathway is porphyrin-containing compound metabolism; bacteriochlorophyll biosynthesis (light-independent). Functionally, component of the dark-operative protochlorophyllide reductase (DPOR) that uses Mg-ATP and reduced ferredoxin to reduce ring D of protochlorophyllide (Pchlide) to form chlorophyllide a (Chlide). This reaction is light-independent. The NB-protein (BchN-BchB) is the catalytic component of the complex. The polypeptide is Light-independent protochlorophyllide reductase subunit B (Roseiflexus sp. (strain RS-1)).